The following is a 585-amino-acid chain: MTIIENISYTHLAIGLIAYNVIKPLYGLHVNRKKAIATGLPYVYTAVYEWSMVWLLVKEIAWPVLKALRLGWLVKYSRPSWNFDAKNKVHEDLGDIFCVVSPGGLSIFVGDPDVICEVTKKRTKFPRPVKSFVKVMGYFGPSILSSEHDEWRFHRRVTNKTFTEPNHKVVWFDSLYQASAMRDEWLSGLDNITSNKEGIIHKMGSDCMKLALHVVTLASFGVQIPWTAQKDAIPTGYEMSFREASEFFLEHIAIMAYCPKWLYKYGPKLAQTAGVAAKNMRRHMMELIQIEDEKLQNGEDGKNLLSAMLQSDDPEAQAKGGSAYDTASVSKTGVRKDFVMGNSAIFLLAGHETSARSLEYALFLFAMHPDVQEEIFEEIDEILEGVGNIYDLKYEEVFPKMVKTNGVLYEATRLFPVTPYIPKSTEDVVDSWFIYKDQRVDIPPESMVALNAIGVHYNERYWPEPYRFKPSRWYQTQKQEALGISPQDTLQLSGSNTDAARLYRRGTYLGFGEGPRNCPGKRFAQVEIMATFLALFREHRMELVLEPGETHRDAFDRAWAALQRSRMVITLNLFEQIKVKLVPRK.

Cys518 contacts heme.

Belongs to the cytochrome P450 family. Requires heme as cofactor.

It functions in the pathway secondary metabolite biosynthesis; terpenoid biosynthesis. Its function is as follows. Cytochrome P450 monooxygenase; part of the gene cluster that mediates the biosynthesis of sesquiterpenyl epoxy-cyclohexenoids (SECs) such as anthrobotrisins and arthrosporols, metabolites that possess a novel hybrid carbon skeleton consisting of a polyketide-derived epoxycyclohexenol combined with a terpenoid-derived monocyclic sesquiterpenol substructure (PKS-PTS hybrid). The SEC pathway plays an important role for fungal soil colonization via decreasing fungal nematode-capturing ability. Within the pathway, the cytochrome P450 monooxygenase AOL_s00215g278 plays a role in the oxygenation of the phenol moiety, most likely in the epoxy formation. The pathway begins with the biosynthesis of 6-methylsalicylic acid (6-MSA), the first precursor of the polyketide-derived epoxycyclohexenol in arthrosporols, by the polyketide synthase (PKS) AOL_s00215g283 via condensation of 1 acetate and 3 malonate units. The 6-methylsalicylic acid decarboxylase AOL_s00215g281 then catalyzes the decarboxylation of 6-methylsalicylic acid to yield m-cresol. The cytochrome P450 monooxygenase AOL_s00215g282 further oxidizes m-cresol to yield toluquinol. With the assistance of the oxidoreductase AOL_s00215g277, the polyprenyl transferase AOL_s00215g276 catalyzes the farnesylation of toluquinol to produce farnesyl hydroquinone, the hybrid precursor for biosynthesis of SECs. Farnesyl hydroquinone undergoes epoxidation and then subsequent dehydrogenation to form farnesyl epoxy-quinone, the first and simplest SEC. The cytochrome P450 monooxygenase AOL_s00215g278 and the FAD-dependent monooxygenase AOL_s00215g279 might be involved in the oxygenation of the phenol moiety, most likely in the epoxy formation. The cytochrome P450 monooxygenases AOL_s00215g274 and AOL_s00215g280 are involved in specific regional ketone reductions at respectively C-4 and C-1 of farnesyl epoxy-quinone PubMed:33823587. The chain is Cytochrome P450 monooxygenase AOL_s00215g278 from Arthrobotrys oligospora (strain ATCC 24927 / CBS 115.81 / DSM 1491) (Nematode-trapping fungus).